We begin with the raw amino-acid sequence, 1344 residues long: DEAD-box ATP-dependent RNA helicase FANCM (1344 aa).

Residues 39–61 form a disordered region; sequence SSSHFTPLANPPITANLTKPPAK. The 169-residue stretch at 124–292 folds into the Helicase ATP-binding domain; the sequence is ITKTALFSNT…GIIDNLQIST (169 aa). 137–144 contacts ATP; that stretch reads LPTGLGKT. The DEAH box signature appears at 240–243; the sequence is DEAH. Positions 450-621 constitute a Helicase C-terminal domain; it reads KLSKMLEILV…SFNFHPSPRM (172 aa). Disordered stretches follow at residues 765 to 790, 1110 to 1148, 1183 to 1218, and 1307 to 1344; these read VNTS…KDYE, EVSS…TQAE, YSAG…SNQD, and KQRS…LGLW. Over residues 1118–1135 the composition is skewed to acidic residues; sequence SADENEDVTGDSFEDSFI. Polar residues predominate over residues 1207–1218; it reads TPKTTNSESNQD. Over residues 1308–1318 the composition is skewed to basic and acidic residues; sequence QRSEAKEKEDA.

The protein belongs to the DEAD box helicase family. DEAH subfamily. FANCM sub-subfamily.

The protein resides in the nucleus. The catalysed reaction is ATP + H2O = ADP + phosphate + H(+). Its function is as follows. Involved in ordered homologous recombination (HR) events in somatic and meiotic cells. Involved in the suppression of spontaneous HR events in somatic cells. Has an opposite function to the DNA binding cofactor MHF1 which promotes spontaneous HR. Functions in replicative repair independently of MHF1 and in a parallel pathway to the endonuclease MUS81. Acts in the same pathway as the two DNA-binding cofactors MHF1 and MHF2 to restrain class II meiotic crossover (CO), and acts exclusively with MHF1 and MHF2 during meiosis to repair DNA interstrand cross-links (ICLs). This common pathway is in parallel to the pathway that involves the RECQ4A helicase. Seems to be involved in the stabilization of recombination intermediates. Involved in DNA double-strand break (DSB) repair during meiosis. Required for synthesis-dependent strand annealing (SDSA) and to a lesser extent for single-strand annealing (SSA). May process meiotic DSB repair intermediates, possibly D-loops, driving them toward noncrossover (NCO) resolution. This chain is DEAD-box ATP-dependent RNA helicase FANCM, found in Arabidopsis thaliana (Mouse-ear cress).